The chain runs to 296 residues: Tyrosine recombinase XerC (296 aa).

The Core-binding (CB) domain maps to 1 to 84 (MNKIQESFLY…TLRSFYEFWM (84 aa)). A Tyr recombinase domain is found at 105 to 286 (YLPHFFYEEE…SNQQLRKVYL (182 aa)). Active-site residues include Arg145, Lys169, His238, Arg241, and His264. Tyr273 serves as the catalytic O-(3'-phospho-DNA)-tyrosine intermediate.

This sequence belongs to the 'phage' integrase family. XerC subfamily. In terms of assembly, forms a cyclic heterotetrameric complex composed of two molecules of XerC and two molecules of XerD.

It localises to the cytoplasm. Its function is as follows. Site-specific tyrosine recombinase, which acts by catalyzing the cutting and rejoining of the recombining DNA molecules. The XerC-XerD complex is essential to convert dimers of the bacterial chromosome into monomers to permit their segregation at cell division. It also contributes to the segregational stability of plasmids. The chain is Tyrosine recombinase XerC from Staphylococcus carnosus (strain TM300).